The chain runs to 187 residues: Intraflagellar transport protein 22 homolog (187 aa).

Residues 10-17 (GPSECGKT), 65-69 (DCAGD), and 125-128 (HKPG) contribute to the GTP site.

The protein belongs to the small GTPase superfamily. Rab family.

The chain is Intraflagellar transport protein 22 homolog (ift22) from Danio rerio (Zebrafish).